Consider the following 353-residue polypeptide: Photosystem II protein D1 (353 aa).

Residue Thr2 is modified to N-acetylthreonine. Thr2 carries the phosphothreonine modification. 3 helical membrane passes run 29–46, 118–133, and 142–156; these read YIGW…TATS, HFLL…EWEL, and WIAV…AATA. A chlorophyll a-binding site is contributed by His118. Tyr126 contributes to the pheophytin a binding site. The [CaMn4O5] cluster site is built by Asp170 and Glu189. The chain crosses the membrane as a helical span at residues 197–218; that stretch reads FHMLGVAGVFGGSLFSAMHGSL. His198 lines the chlorophyll a pocket. A quinone is bound by residues His215 and 264–265; that span reads SF. His215 contacts Fe cation. His272 provides a ligand contact to Fe cation. A helical membrane pass occupies residues 274–288; the sequence is FLAAWPVVGIWFTAL. Positions 332, 333, 342, and 344 each coordinate [CaMn4O5] cluster. A propeptide spanning residues 345-353 is cleaved from the precursor; sequence AVEAPSTNG.

Belongs to the reaction center PufL/M/PsbA/D family. As to quaternary structure, PSII is composed of 1 copy each of membrane proteins PsbA, PsbB, PsbC, PsbD, PsbE, PsbF, PsbH, PsbI, PsbJ, PsbK, PsbL, PsbM, PsbT, PsbX, PsbY, PsbZ, Psb30/Ycf12, at least 3 peripheral proteins of the oxygen-evolving complex and a large number of cofactors. It forms dimeric complexes. Requires The D1/D2 heterodimer binds P680, chlorophylls that are the primary electron donor of PSII, and subsequent electron acceptors. It shares a non-heme iron and each subunit binds pheophytin, quinone, additional chlorophylls, carotenoids and lipids. D1 provides most of the ligands for the Mn4-Ca-O5 cluster of the oxygen-evolving complex (OEC). There is also a Cl(-1) ion associated with D1 and D2, which is required for oxygen evolution. The PSII complex binds additional chlorophylls, carotenoids and specific lipids. as cofactor. Post-translationally, tyr-161 forms a radical intermediate that is referred to as redox-active TyrZ, YZ or Y-Z. In terms of processing, C-terminally processed by CTPA; processing is essential to allow assembly of the oxygen-evolving complex and thus photosynthetic growth.

Its subcellular location is the plastid. The protein resides in the chloroplast thylakoid membrane. The catalysed reaction is 2 a plastoquinone + 4 hnu + 2 H2O = 2 a plastoquinol + O2. Its function is as follows. Photosystem II (PSII) is a light-driven water:plastoquinone oxidoreductase that uses light energy to abstract electrons from H(2)O, generating O(2) and a proton gradient subsequently used for ATP formation. It consists of a core antenna complex that captures photons, and an electron transfer chain that converts photonic excitation into a charge separation. The D1/D2 (PsbA/PsbD) reaction center heterodimer binds P680, the primary electron donor of PSII as well as several subsequent electron acceptors. The polypeptide is Photosystem II protein D1 (Oenothera parviflora (Small-flowered evening primrose)).